We begin with the raw amino-acid sequence, 157 residues long: Nascent polypeptide-associated complex subunit beta (157 aa).

Positions 1–28 (MPVDPEKLAKLQKSSAKKVGGSRVKAKK) are disordered. Residues 33–98 (EQDDTKLIEA…PQEKNITQLI (66 aa)) form the NAC-A/B domain. Residues 124–157 (KTPKDFNTGSANAAADAGGEDIPDLVDQKFDDVE) are disordered.

It belongs to the NAC-beta family. Part of the nascent polypeptide-associated complex (NAC), consisting of EGD2 and EGD1. NAC associates with ribosomes via EGD1.

Its subcellular location is the cytoplasm. It localises to the nucleus. Component of the nascent polypeptide-associated complex (NAC), a dynamic component of the ribosomal exit tunnel, protecting the emerging polypeptides from interaction with other cytoplasmic proteins to ensure appropriate nascent protein targeting. The NAC complex also promotes mitochondrial protein import by enhancing productive ribosome interactions with the outer mitochondrial membrane and blocks the inappropriate interaction of ribosomes translating non-secretory nascent polypeptides with translocation sites in the membrane of the endoplasmic reticulum. EGD1 may act as a transcription factor that exert a negative effect on the expression of several genes that are transcribed by RNA polymerase II. This is Nascent polypeptide-associated complex subunit beta (EGD1) from Candida albicans (strain SC5314 / ATCC MYA-2876) (Yeast).